We begin with the raw amino-acid sequence, 327 residues long: tRNA uridine(34) hydroxylase (327 aa).

The region spanning 130–224 is the Rhodanese domain; the sequence is LDEDTVVLDT…YGKDPEVQGE (95 aa). Cys184 acts as the Cysteine persulfide intermediate in catalysis.

This sequence belongs to the TrhO family.

It carries out the reaction uridine(34) in tRNA + AH2 + O2 = 5-hydroxyuridine(34) in tRNA + A + H2O. In terms of biological role, catalyzes oxygen-dependent 5-hydroxyuridine (ho5U) modification at position 34 in tRNAs. The sequence is that of tRNA uridine(34) hydroxylase from Streptococcus thermophilus (strain CNRZ 1066).